Consider the following 205-residue polypeptide: Small ribosomal subunit protein uS4 (205 aa).

A compositionally biased stretch (basic and acidic residues) spans 1–16 (MSKRESSKYKIDRRMG). The segment at 1 to 46 (MSKRESSKYKIDRRMGENIWGRPKSPVNRREYGPGQHGQRRKSKLS) is disordered. The S4 RNA-binding domain maps to 94–157 (SRLDAIVYRA…KQLVTVLEAV (64 aa)).

This sequence belongs to the universal ribosomal protein uS4 family. As to quaternary structure, part of the 30S ribosomal subunit. Contacts protein S5. The interaction surface between S4 and S5 is involved in control of translational fidelity.

Functionally, one of the primary rRNA binding proteins, it binds directly to 16S rRNA where it nucleates assembly of the body of the 30S subunit. In terms of biological role, with S5 and S12 plays an important role in translational accuracy. The polypeptide is Small ribosomal subunit protein uS4 (Sinorhizobium medicae (strain WSM419) (Ensifer medicae)).